Here is a 411-residue protein sequence, read N- to C-terminus: Multidrug resistance protein MdtA (411 aa).

Positions 1–19 are cleaved as a signal peptide; that stretch reads MNAKRIRGLLILAAVIAIA. Positions 31–49 are enriched in polar residues; the sequence is PAAPGTSEQHAARTSHSEN. The interval 31-58 is disordered; the sequence is PAAPGTSEQHAARTSHSENSGSGGGRRA.

The protein belongs to the membrane fusion protein (MFP) (TC 8.A.1) family. Part of a tripartite efflux system composed of MdtA, MdtB and MdtC.

Its subcellular location is the cell inner membrane. This is Multidrug resistance protein MdtA from Pectobacterium atrosepticum (strain SCRI 1043 / ATCC BAA-672) (Erwinia carotovora subsp. atroseptica).